The chain runs to 44 residues: Thioredoxin (44 aa).

The 43-residue stretch at 2-44 folds into the Thioredoxin domain; it reads IELDKSNFEEEVLKAEGTVLVDFWSPSCEPCKALMPHVHDFEE. Cysteine 29 and cysteine 32 are disulfide-bonded.

This sequence belongs to the thioredoxin family.

Participates in various redox reactions through the reversible oxidation of its active center dithiol to a disulfide and catalyzes dithiol-disulfide exchange reactions. This chain is Thioredoxin (trxA), found in Tissierella creatinophila.